The primary structure comprises 724 residues: MALAMQSSEFQFAQRLASSEKGVRDRAVRKLRQYLSARTQSDTGSFSQEELLKIWKGLFYCMWVQDEPLLQEELANIISQLIHVVNSLEAQYLFIQTFWQTMNREWQGIDKLQLDKYYMLIRLVLRQSFEVLKRNAWEESQITLFLDILMKEILSPESQSPNGVRTHLIDVYLEELTTVGGAELLADQNLKLIDPFCRIAAKTKDHTLVQTVARGVFEVIVDQSACVPQESVEERKTKEDGSGFPTKALACRKAVSGKKAALDECLRDGVIGSRERDICAALKDSGSPLQFDYKAVADRLLEIANSKSTPPFNRKRLCRLVRKFQDLCEGNGAPLSSAEDNGQRRHKRKRKKLLESEKGDTVSPAAEEDSGGHIHKKKRKKRKRSHFQPDTQNLDAVAVPKVPDSESEPDTAQRQAPCGQACVTEPTAEAVSSIGENSSKPTPVMPIHNKRKRPRKKKLRAHKEICKSTTLPQEDMSKNDAVSGHSQSSAAHISSSEGVQAQKRKRKLGALPDSSSDLPVQKSGTPTSPVEGKDGQTTLPRCKRSQKKTASSTLDPCDPSSQKPAISKKKKKTMKLMSNGVLESNPGQIQALGSNRTLKKPLKTEDDFVKFDTRFLPKPLFFRKAKNSSATRPQGPAGQLNKTPSSSKKVTFGLNRNMTAEFKKTDKSILVSPTGLSRVAFNPEQRPLHGVLKTATSSPASTPLSPMRLPATTPKRRPRAADFF.

The segment at 331–576 (NGAPLSSAED…SKKKKKTMKL (246 aa)) is disordered. A phosphoserine mark is found at Ser-336 and Ser-370. Residues 373–386 (HIHKKKRKKRKRSH) are compositionally biased toward basic residues. Phosphoserine occurs at positions 432 and 438. Over residues 448–461 (HNKRKRPRKKKLRA) the composition is skewed to basic residues. Low complexity predominate over residues 483-496 (SGHSQSSAAHISSS). Ser-494 is subject to Phosphoserine. Composition is skewed to polar residues over residues 513–528 (DSSS…TPTS) and 548–564 (KTAS…SQKP). Lys-618 carries the N6-acetyllysine modification. The interval 625–649 (AKNSSATRPQGPAGQLNKTPSSSKK) is disordered. A compositionally biased stretch (polar residues) spans 640–649 (LNKTPSSSKK). Residues Ser-668 and Ser-672 each carry the phosphoserine modification. The residue at position 678 (Arg-678) is a Citrulline. The segment at 687–724 (PLHGVLKTATSSPASTPLSPMRLPATTPKRRPRAADFF) is disordered. At Thr-694 the chain carries Phosphothreonine. Residues 694–706 (TATSSPASTPLSP) show a composition bias toward low complexity. Residues Ser-698 and Ser-701 each carry the phosphoserine modification.

The protein belongs to the RRP1 family. As to quaternary structure, interacts with the transcriptional activator E2F1. Interacts with serine/threonine-protein phosphatase PP1 subunits PPP1CB and PPP1CC but not with PPP1CA. Interacts with 60S ribosomal proteins RPL5 and RPL27, ribosomal processing protein RRP1/NNP1 and other nucleolar proteins including NOP2/NOL1 and FBL. Also interacts with nucleolar protein NPM1/B23. Interacts with splicing factor SRSF1 and LUC7L3/CROP. Interacts with GTPase activator SIPA1. Interacts with H1-10, NCL, PARP1, TRIM28 and YBX3. Citrullinated by PADI4.

The protein resides in the nucleus. It localises to the nucleolus. It is found in the nucleoplasm. Its subcellular location is the chromosome. Positively regulates DNA damage-induced apoptosis by acting as a transcriptional coactivator of proapoptotic target genes of the transcriptional activator E2F1. Likely to play a role in ribosome biogenesis by targeting serine/threonine protein phosphatase PP1 to the nucleolus. Involved in regulation of mRNA splicing. Inhibits SIPA1 GTPase activity. Involved in regulating expression of extracellular matrix genes. Associates with chromatin and may play a role in modulating chromatin structure. This is Ribosomal RNA processing protein 1 homolog B (Rrp1b) from Mus musculus (Mouse).